Here is a 191-residue protein sequence, read N- to C-terminus: Rubrerythrin (191 aa).

One can recognise a Ferritin-like diiron domain in the interval 1–146 (MKSLKGSRTE…DFARNIKEGR (146 aa)). Positions 20, 53, 94, 97, 128, 131, 158, 161, 174, and 177 each coordinate Fe(3+). Residues 153–191 (ATKWRCRNCGYVHEGTGAPELCPACAHPKAHFELLGINW) enclose the Rubredoxin-like domain.

Homodimer. Possesses two rubredoxin-like centers and two non-sulfur oxo-bridged di-iron centers per dimer. Fe(3+) is required as a cofactor.

It is found in the cytoplasm. In terms of biological role, may provide oxidative stress protection via catalytic reduction of intracellular hydrogen peroxide. The sequence is that of Rubrerythrin (rbr) from Nitratidesulfovibrio vulgaris (strain ATCC 29579 / DSM 644 / CCUG 34227 / NCIMB 8303 / VKM B-1760 / Hildenborough) (Desulfovibrio vulgaris).